The chain runs to 405 residues: 4-hydroxy-3-methylbut-2-en-1-yl diphosphate synthase (flavodoxin) (405 aa).

4 residues coordinate [4Fe-4S] cluster: Cys-297, Cys-300, Cys-343, and Glu-350.

Belongs to the IspG family. [4Fe-4S] cluster serves as cofactor.

The catalysed reaction is (2E)-4-hydroxy-3-methylbut-2-enyl diphosphate + oxidized [flavodoxin] + H2O + 2 H(+) = 2-C-methyl-D-erythritol 2,4-cyclic diphosphate + reduced [flavodoxin]. Its pathway is isoprenoid biosynthesis; isopentenyl diphosphate biosynthesis via DXP pathway; isopentenyl diphosphate from 1-deoxy-D-xylulose 5-phosphate: step 5/6. Its function is as follows. Converts 2C-methyl-D-erythritol 2,4-cyclodiphosphate (ME-2,4cPP) into 1-hydroxy-2-methyl-2-(E)-butenyl 4-diphosphate. The sequence is that of 4-hydroxy-3-methylbut-2-en-1-yl diphosphate synthase (flavodoxin) from Francisella tularensis subsp. tularensis (strain FSC 198).